The sequence spans 128 residues: Sulfurtransferase TusD (128 aa).

Cys78 (cysteine persulfide intermediate) is an active-site residue.

This sequence belongs to the DsrE/TusD family. Heterohexamer, formed by a dimer of trimers. The hexameric TusBCD complex contains 2 copies each of TusB, TusC and TusD. The TusBCD complex interacts with TusE.

It localises to the cytoplasm. Its function is as follows. Part of a sulfur-relay system required for 2-thiolation of 5-methylaminomethyl-2-thiouridine (mnm(5)s(2)U) at tRNA wobble positions. Accepts sulfur from TusA and transfers it in turn to TusE. This chain is Sulfurtransferase TusD, found in Buchnera aphidicola subsp. Acyrthosiphon pisum (strain 5A).